A 425-amino-acid polypeptide reads, in one-letter code: MSERNVIQELEARGLIAQQTDSGALQKLLESESVTLYCGFDPTADSLHLGHLVPLLMLRRFQEAGHRPIALVGGATGMIGDPSFKAAERKLNTPDVIAGWVDKIRRQLSPFLSFEGDNAAVMANNYDWFGQMNVLEFLRDIGKHFSVNAMIKKESVQQRISREDQGISFTEFSYSLLQGNDFAELNCRFGCKLQIGGSDQWGNITAGIDLTRRLNQQQVFGLTVPLITNSDGTKFGKSEGNAVWLDPQKCSPYKFYQFWLGVADADVYRFLRYFTFLSIEQIDAIEAADKTSGTRPQAQRILAEEATRLVHGDEALKAAQRITESLFSNDLSALTAEDLAQLALDGLPVLDMAGQGDGLIDALAASGLAKSKSEARTFIQSGAVSINGIKAEGLDYCLTGNDRLFGRYTLLKRGKKLYALLVWPA.

An L-tyrosine-binding site is contributed by Tyr-37. The 'HIGH' region motif lies at 42–51 (PTADSLHLGH). Residues Tyr-174 and Gln-178 each coordinate L-tyrosine. Residues 234 to 238 (KFGKS) carry the 'KMSKS' region motif. Residue Lys-237 coordinates ATP. One can recognise an S4 RNA-binding domain in the interval 357-422 (DGLIDALAAS…RGKKLYALLV (66 aa)).

Belongs to the class-I aminoacyl-tRNA synthetase family. TyrS type 1 subfamily. In terms of assembly, homodimer.

The protein localises to the cytoplasm. The catalysed reaction is tRNA(Tyr) + L-tyrosine + ATP = L-tyrosyl-tRNA(Tyr) + AMP + diphosphate + H(+). Catalyzes the attachment of tyrosine to tRNA(Tyr) in a two-step reaction: tyrosine is first activated by ATP to form Tyr-AMP and then transferred to the acceptor end of tRNA(Tyr). This chain is Tyrosine--tRNA ligase, found in Laribacter hongkongensis (strain HLHK9).